A 273-amino-acid chain; its full sequence is Cell wall mannoprotein 1 (273 aa).

An N-terminal signal peptide occupies residues 1 to 17 (MRFSAIFTLGLAGTALA). Residues 173 to 247 (DVSDSAPSSS…GSASATSPPL (75 aa)) are disordered. The segment covering 177-247 (SAPSSSAGSS…GSASATSPPL (71 aa)) has biased composition (low complexity).

Belongs to the cell wall mannoprotein 1 family. Post-translationally, galactomannoprotein, glycosylated.

Its subcellular location is the secreted. The protein resides in the cell wall. Functionally, constitutive protein of the cell wall. Antigen target of host humoral immune response. The sequence is that of Cell wall mannoprotein 1 from Aspergillus flavus.